The sequence spans 303 residues: Methionyl-tRNA formyltransferase (303 aa).

Position 108 to 111 (S108 to P111) interacts with (6S)-5,6,7,8-tetrahydrofolate.

Belongs to the Fmt family.

It catalyses the reaction L-methionyl-tRNA(fMet) + (6R)-10-formyltetrahydrofolate = N-formyl-L-methionyl-tRNA(fMet) + (6S)-5,6,7,8-tetrahydrofolate + H(+). Its function is as follows. Attaches a formyl group to the free amino group of methionyl-tRNA(fMet). The formyl group appears to play a dual role in the initiator identity of N-formylmethionyl-tRNA by promoting its recognition by IF2 and preventing the misappropriation of this tRNA by the elongation apparatus. The sequence is that of Methionyl-tRNA formyltransferase from Rickettsia typhi (strain ATCC VR-144 / Wilmington).